Here is a 432-residue protein sequence, read N- to C-terminus: Adenylosuccinate synthetase (432 aa).

GTP-binding positions include 13–19 (GDEGKGK) and 41–43 (GHT). The active-site Proton acceptor is Asp-14. The Mg(2+) site is built by Asp-14 and Gly-41. Residues 14-17 (DEGK), 39-42 (NAGH), Thr-130, Arg-144, Gln-225, Thr-240, and Arg-304 each bind IMP. Residue His-42 is the Proton donor of the active site. 300–306 (ATTGRRR) provides a ligand contact to substrate. Residues Arg-306, 332-334 (KLD), and 414-416 (STG) contribute to the GTP site.

This sequence belongs to the adenylosuccinate synthetase family. Homodimer. Mg(2+) is required as a cofactor.

The protein resides in the cytoplasm. The catalysed reaction is IMP + L-aspartate + GTP = N(6)-(1,2-dicarboxyethyl)-AMP + GDP + phosphate + 2 H(+). It functions in the pathway purine metabolism; AMP biosynthesis via de novo pathway; AMP from IMP: step 1/2. Its function is as follows. Plays an important role in the de novo pathway of purine nucleotide biosynthesis. Catalyzes the first committed step in the biosynthesis of AMP from IMP. This chain is Adenylosuccinate synthetase, found in Methylococcus capsulatus (strain ATCC 33009 / NCIMB 11132 / Bath).